Reading from the N-terminus, the 122-residue chain is NADH-quinone oxidoreductase subunit A (122 aa).

Helical transmembrane passes span 12 to 32 (IIIFLIIALGLSCAFVVVNLI), 66 to 86 (LVAILFIIFDLEIAFLFPWAI), and 91 to 111 (IGGLGFTSMMIFLFILTVGFI).

This sequence belongs to the complex I subunit 3 family. In terms of assembly, NDH-1 is composed of 14 different subunits. Subunits NuoA, H, J, K, L, M, N constitute the membrane sector of the complex.

The protein localises to the cell inner membrane. It carries out the reaction a quinone + NADH + 5 H(+)(in) = a quinol + NAD(+) + 4 H(+)(out). Its function is as follows. NDH-1 shuttles electrons from NADH, via FMN and iron-sulfur (Fe-S) centers, to quinones in the respiratory chain. The immediate electron acceptor for the enzyme in this species is believed to be ubiquinone. Couples the redox reaction to proton translocation (for every two electrons transferred, four hydrogen ions are translocated across the cytoplasmic membrane), and thus conserves the redox energy in a proton gradient. This Pelagibacter ubique (strain HTCC1062) protein is NADH-quinone oxidoreductase subunit A.